The chain runs to 689 residues: Protein asunder (689 aa).

A coiled-coil region spans residues 521–550 (NGARLKLSKAKDQYRLLYRELEQLIQLNAT). 2 disordered regions span residues 578–619 (GASL…SKRR) and 662–689 (PDFGNKDKDTVASGASITPNVKEESVRS). Low complexity predominate over residues 599-614 (SSGSASGSSNSNSLLK). Positions 613–619 (LKASKRR) match the Nuclear localization signal (NLS) motif.

Belongs to the Integrator subunit 13 family. In terms of assembly, belongs to the multiprotein complex Integrator, at least composed of IntS1, IntS2, IntS3, IntS4, omd/IntS5, IntS6, defl/IntS7, IntS8, IntS9, IntS10, IntS11, IntS12, asun/IntS13, IntS14 and IntS15. The core complex associates with protein phosphatase 2A subunits mts/PP2A and Pp2A-29B, to form the Integrator-PP2A (INTAC) complex. Phosphorylated.

The protein resides in the nucleus. It is found in the cytoplasm. Its subcellular location is the perinuclear region. Functionally, component of the integrator complex, a multiprotein complex that terminates RNA polymerase II (Pol II) transcription in the promoter-proximal region of genes. The integrator complex provides a quality checkpoint during transcription elongation by driving premature transcription termination of transcripts that are unfavorably configured for transcriptional elongation: the complex terminates transcription by (1) catalyzing dephosphorylation of the C-terminal domain (CTD) of Pol II subunit Polr2A/Rbp1 and Spt5, and (2) degrading the exiting nascent RNA transcript via endonuclease activity. The integrator complex is also involved in the 3'-end processing of the U7 snRNA, and also the spliceosomal snRNAs U1, U2, U4 and U5. The chain is Protein asunder (asun) from Drosophila yakuba (Fruit fly).